Consider the following 362-residue polypeptide: Somatostatin receptor type 5 (362 aa).

Over residues 1 to 10 the composition is skewed to polar residues; sequence MEPLSLTSTP. The disordered stretch occupies residues 1–24; that stretch reads MEPLSLTSTPSWNASAASSSSHNW. Residues 1-35 lie on the Extracellular side of the membrane; that stretch reads MEPLSLTSTPSWNASAASSSSHNWSLVDPVSPMGA. A compositionally biased stretch (low complexity) spans 11–24; the sequence is SWNASAASSSSHNW. Asparagine 13 and asparagine 23 each carry an N-linked (GlcNAc...) asparagine glycan. The chain crosses the membrane as a helical span at residues 36–63; it reads RAVLVPVLYLLVCTVGLGGNTLVIYVVL. The Cytoplasmic portion of the chain corresponds to 64 to 73; that stretch reads RYAKMKTVTN. Residues 74-99 form a helical membrane-spanning segment; sequence VYILNLAVADVLFMLGLPFLATQNAV. Residues 100-110 are Extracellular-facing; it reads SYWPFGSFLCR. Residues cysteine 109 and cysteine 184 are joined by a disulfide bond. A helical transmembrane segment spans residues 111–132; that stretch reads LVMTLDGINQFTSIFCLMVMSV. Residues 133-154 lie on the Cytoplasmic side of the membrane; the sequence is DRYLAVVHPLRSARWRRPRVAK. A helical membrane pass occupies residues 155–175; the sequence is LASAAVWVFSLLMSLPLLVFA. The Extracellular portion of the chain corresponds to 176-195; sequence DVQEGWGTCNLSWPEPVGLW. N-linked (GlcNAc...) asparagine glycosylation occurs at asparagine 185. Residues 196-220 form a helical membrane-spanning segment; sequence GAAFITYTSVLGFFGPLLVICLCYL. Over 221 to 246 the chain is Cytoplasmic; the sequence is LIVVKVKAAGMRVGSSRRRRSERKVT. A helical transmembrane segment spans residues 247–272; sequence RMVVVVVLVFVGCWLPFFIVNIVNLA. Residues 273–282 are Extracellular-facing; sequence FTLPEEPTSA. Residues 283–307 traverse the membrane as a helical segment; the sequence is GLYFFVVVLSYANSCANPLLYGFLS. Residues 308–362 are Cytoplasmic-facing; sequence DNFRQSFRKALCLRRGYGVEDADAIEPRPDKSGRPQTTLPTRSCEANGLMQTSRL. Cysteine 319 is lipidated: S-palmitoyl cysteine; by ZDHHC5. The tract at residues 330 to 362 is disordered; it reads DAIEPRPDKSGRPQTTLPTRSCEANGLMQTSRL.

The protein belongs to the G-protein coupled receptor 1 family. As to quaternary structure, heterodimer with SSTR2. Heterodimerization with SSTR2 increases cell growth inhibition activity of SSTR2. Palmitoylated at Cys-319 by ZDHHC5, but not ZDHHC8. Palmitoylation creates an additional intracellular loop which is thought to be important for efficient coupling to G-proteins and may target the protein to lipid rafts. In terms of tissue distribution, expressed in adult brain but not in liver, heart, spleen, or kidney.

The protein localises to the cell membrane. In terms of biological role, receptor for somatostatin-28. The activity of this receptor is mediated by G proteins which inhibit adenylyl cyclase. Increases cell growth inhibition activity of SSTR2 following heterodimerization. The polypeptide is Somatostatin receptor type 5 (Sstr5) (Mus musculus (Mouse)).